The primary structure comprises 788 residues: Bifunctional purine biosynthetic protein ADE1 (788 aa).

The GARS stretch occupies residues 1 to 430; that stretch reads MEPIIALLIG…DIAHHALNPK (430 aa). Positions 115–321 constitute an ATP-grasp domain; it reads KDFMHRNNIP…LAEIILACVN (207 aa). An ATP-binding site is contributed by 141 to 202; that stretch reads LDTCTFDVVI…EELLEGEELS (62 aa). The Mg(2+) site is built by glutamate 291 and asparagine 293. Positions 437-769 are AIRS; that stretch reads LTYENSGVSV…TVYRIGQLVD (333 aa).

This sequence in the N-terminal section; belongs to the GARS family. It in the C-terminal section; belongs to the AIR synthase family. Mg(2+) serves as cofactor. Requires Mn(2+) as cofactor.

It localises to the cytoplasm. The protein localises to the cytosol. It catalyses the reaction 5-phospho-beta-D-ribosylamine + glycine + ATP = N(1)-(5-phospho-beta-D-ribosyl)glycinamide + ADP + phosphate + H(+). The catalysed reaction is 2-formamido-N(1)-(5-O-phospho-beta-D-ribosyl)acetamidine + ATP = 5-amino-1-(5-phospho-beta-D-ribosyl)imidazole + ADP + phosphate + H(+). Its pathway is purine metabolism; IMP biosynthesis via de novo pathway; 5-amino-1-(5-phospho-D-ribosyl)imidazole from N(2)-formyl-N(1)-(5-phospho-D-ribosyl)glycinamide: step 2/2. The protein operates within purine metabolism; IMP biosynthesis via de novo pathway; N(1)-(5-phospho-D-ribosyl)glycinamide from 5-phospho-alpha-D-ribose 1-diphosphate: step 2/2. In terms of biological role, catalyzes the second and fifth step in the 'de novo' purine biosynthesis pathway; contains phosphoribosylamine--glycine ligase (GARS) and phosphoribosylformylglycinamidine cyclo-ligase (AIRS) activities. In Schizosaccharomyces pombe (strain 972 / ATCC 24843) (Fission yeast), this protein is Bifunctional purine biosynthetic protein ADE1.